A 217-amino-acid polypeptide reads, in one-letter code: Probable ribonuclease P protein subunit 1 (217 aa).

It belongs to the eukaryotic/archaeal RNase P protein component 1 family.

Its subcellular location is the nucleus. The protein localises to the nucleolus. The enzyme catalyses Endonucleolytic cleavage of RNA, removing 5'-extranucleotides from tRNA precursor.. Functionally, part of ribonuclease P, a protein complex that generates mature tRNA molecules by cleaving their 5'-ends. The sequence is that of Probable ribonuclease P protein subunit 1 from Schizosaccharomyces pombe (strain 972 / ATCC 24843) (Fission yeast).